We begin with the raw amino-acid sequence, 510 residues long: Cytochrome P450 monooxygenase BOT1 (510 aa).

The helical transmembrane segment at Pro16 to Val36 threads the bilayer. Cys454 contributes to the heme binding site. Asn476 is a glycosylation site (N-linked (GlcNAc...) asparagine).

Belongs to the cytochrome P450 family. The cofactor is heme.

The protein localises to the membrane. It functions in the pathway secondary metabolite biosynthesis. Functionally, cytochrome P450 monooxygenase; part of the gene cluster that mediates the biosynthesis of botrydial. Botrydial is necessary for colonization of plant tissue by the T4 strain. It is a strain-dependent virulence factor since highly aggressive strains like SAS56 or B05 still retain substantial virulence when botrydial synthesis is impaired, since they produce also botcinic acid. The first step of botrydial biosynthesis is performed by the sesquiterpene synthase BOT2 which catalyzes the cyclization of farnesyl diphosphate (FPP) to presilphiperfolan-8-beta-ol (PSP). The cytochrome P450 monooxygenase BOT4 then catalyzes the hydroxylation at C-4 to give a probotryane intermediate. Acetylation of the hydroxyl at C-4 is carried out by the acetyltransferase BOT5, followed by the combined action of the P450 monooxygenases BOT3 and BOT1, to yield finally the glycol, via the regio- and stereospecific hydroxylations at C-10 and C-15 of the probotryane intermediates, respectively. The cleavage of the C10-C15 bond of probotryane skeleton is an intriguing and chemically important reaction, which could be mediated by some of the monooxygenases or by a combination of them. It is possible that either BOT3 or BOT1 would oxidize either the 10- or the 15-hydroxy group to the hydroperoxide derivative, which would then undergo heterolytic fragmentation to give the dialdehyde botrydial. Finally, the dehydrogenase BOT7 might be involved in the conversion of botrydial to dihydrobotrydial. This is Cytochrome P450 monooxygenase BOT1 from Botryotinia fuckeliana (Noble rot fungus).